The following is a 178-amino-acid chain: ATP-dependent protease subunit HslV (178 aa).

Residue threonine 2 is part of the active site. Na(+) contacts are provided by glycine 157, cysteine 160, and threonine 163.

It belongs to the peptidase T1B family. HslV subfamily. As to quaternary structure, a double ring-shaped homohexamer of HslV is capped on each side by a ring-shaped HslU homohexamer. The assembly of the HslU/HslV complex is dependent on binding of ATP.

The protein resides in the cytoplasm. It catalyses the reaction ATP-dependent cleavage of peptide bonds with broad specificity.. Allosterically activated by HslU binding. Its function is as follows. Protease subunit of a proteasome-like degradation complex believed to be a general protein degrading machinery. The sequence is that of ATP-dependent protease subunit HslV from Hamiltonella defensa subsp. Acyrthosiphon pisum (strain 5AT).